The sequence spans 633 residues: MNSVLNSGRTTICDAYNVVAHDPFSFEHKSLDTIQKEWMEWKRTDHSLYVAPVVGTVSSFLLKKVGSLIGKRILSELWGIIFPSGSTNLMQDILRETEQFLNQRLNTDTLARVNAELIGLQANIREFNQQVDNFLNPTQNPVPLSITSSVNTMQQLFLNRLPQFQIQGYQLLLLPLFAQAANMHLSFIRDVILNADEWGISAATLRTYRDYLRNYTRDYSNYCINTYQTAFRGLNTRLHDMLEFRTYMFLNVFEYVSIWSLFKYQSLMVSSGANLYASGSGPQQTQSFTAQNWPFLYSLFQVNSNYILSGISGTRLSITFPNIGGLPGSTTTHSLNSARVNYSGGVSSGLIGATNLNHNFNCSTVLPPLSTPFVRSWLDSGTDREGVATSTNWQTESFQTTLSLRCGASSARGNSNYFPDYFIRNISGVPLVIRNEDLTRPLHYNQIRNIESPSGTPGGARAYLVSVHNRKNNIYAANENGTMIHLAPEDYTGFTISPIHATQVNNQTRTFISEKFGNQGDSLRFEQSNTTARYTLRGNGSSYNLYLRVSSIGNSTIRVTINGRVYTVSNVNTTTNNDGVNDNGARFPDINIGNIVASDNTNVTLDINVTLNSGTPFDLMNIMFVPTNLPPLY.

Belongs to the delta endotoxin family.

In terms of biological role, promotes colloidosmotic lysis by binding to the midgut epithelial cells of both dipteran (Aedes aegypti) and lepidopteran (Manduca sexta) larvae. In Bacillus thuringiensis subsp. kenyae, this protein is Pesticidal crystal protein Cry2Aa (cry2Aa).